The following is a 189-amino-acid chain: Mitochondrial FAD-linked sulfhydryl oxidase ERV1 (189 aa).

The 101-residue stretch at 83–183 (DPPDVEQLGR…FDCNFWEKRW (101 aa)) folds into the ERV/ALR sulfhydryl oxidase domain. FAD is bound by residues 88-95 (EQLGRSSW), H99, and Y128. Cystine bridges form between C130/C133 and C159/C176. FAD-binding positions include 159–171 (CEAHNKVNKKLRK) and 182–183 (RW).

As to quaternary structure, homodimer. Interacts with MIA40, forming transient intermolecular disulfide bridges. Requires FAD as cofactor.

Its subcellular location is the mitochondrion intermembrane space. The catalysed reaction is 2 R'C(R)SH + O2 = R'C(R)S-S(R)CR' + H2O2. Its function is as follows. FAD-dependent sulfhydryl oxidase that catalyzes disulfide bond formation. Required for the import and folding of small cysteine-containing proteins in the mitochondrial intermembrane space (IMS). Forms a redox cycle with MIA40 that involves a disulfide relay system. Important for maintaining the cysteine residues in MIA40 in an oxidized state. Reduced ERV1 is reoxidized by cytochrome c. Required for the maturation of cytoplasmic, but not of mitochondrial Fe/S proteins. The protein is Mitochondrial FAD-linked sulfhydryl oxidase ERV1 (ERV1) of Saccharomyces cerevisiae (strain ATCC 204508 / S288c) (Baker's yeast).